The chain runs to 230 residues: Putative transcription factor bHLH107 (230 aa).

One can recognise a bHLH domain in the interval 44 to 93; the sequence is ASLRNHKEAERKRRARINSHLNKLRKLLSCNSKTDKSTLLAKVVQRVKEL.

In terms of assembly, homodimer.

It is found in the nucleus. In Arabidopsis thaliana (Mouse-ear cress), this protein is Putative transcription factor bHLH107 (BHLH107).